The chain runs to 450 residues: Vacuolar cation/proton exchanger 1c (450 aa).

The Cytoplasmic portion of the chain corresponds to 1 to 73 (MAPPESSHHH…LLGGPAAQLQ (73 aa)). The interval 28-52 (AAEEEEKKEAAAWTPSSSSSMTGRK) is disordered. Residues 74–94 (EVLLGTKLYPLFSAVPLAVAA) traverse the membrane as a helical segment. At 95–101 (ESLRLGR) the chain is on the extracellular side. The helical transmembrane segment at 102 to 122 (VWVFAFSLIGLAPLAERVSFL) threads the bilayer. The Cytoplasmic segment spans residues 123–134 (SEHIANTVGPTA). The chain crosses the membrane as a helical span at residues 135-155 (GGIMNATCGNVPELIIALFAL). The segment at 143 to 178 (GNVPELIIALFALHKNKMEILKWSLLGSILSNLLLV) is cation selection. The Extracellular portion of the chain corresponds to 156-170 (HKNKMEILKWSLLGS). A helical membrane pass occupies residues 171 to 191 (ILSNLLLVLGSSLLFGGIVNI). Topologically, residues 192-201 (GKERPLDKRQ) are cytoplasmic. The helical transmembrane segment at 202 to 222 (ADVSIGLLLLGVLCHIATLVS) threads the bilayer. The Extracellular segment spans residues 223–239 (KYTSSTGDSINSSSVMQ). The helical transmembrane segment at 240–260 (LSRSCAIVMLIAYFGSLMFQL) threads the bilayer. The Cytoplasmic portion of the chain corresponds to 261–287 (KTHRQIFELEEDSSDSSSSEDDATDKS). Residues 288–308 (VIGFASAMVWLIGMAVVTAML) traverse the membrane as a helical segment. The Extracellular portion of the chain corresponds to 309-331 (SSYVVTTIEEASESMGIPVRFIS). A helical transmembrane segment spans residues 332 to 352 (IILLPIVGNAAEHAGAIIFAF). Positions 339 to 374 (GNAAEHAGAIIFAFKNKIDISLGITLGSATQISMLV) are cation selection. Residues 353–360 (KNKIDISL) are Cytoplasmic-facing. A helical membrane pass occupies residues 361-381 (GITLGSATQISMLVVPVILIV). Over 382-385 (SWVN) the chain is Extracellular. Residues 386–406 (AIPMDLDFNLLETGSLAMAVI) form a helical membrane-spanning segment. Over 407-424 (TTAFTLQDDKWHYLKGLN) the chain is Cytoplasmic. A helical transmembrane segment spans residues 425–445 (LVFSYIVIAVCFFVMKALPTL). The Extracellular portion of the chain corresponds to 446–450 (KKEDD).

Belongs to the Ca(2+):cation antiporter (CaCA) (TC 2.A.19) family. Cation/proton exchanger (CAX) subfamily. In terms of tissue distribution, expressed in leaf blades.

The protein resides in the vacuole membrane. Its function is as follows. Vacuolar cation/proton exchanger (CAX). Translocates Ca(2+) and other metal ions into vacuoles using the proton gradient formed by H(+)-ATPase and H(+)-pyrophosphatase. In Oryza sativa subsp. japonica (Rice), this protein is Vacuolar cation/proton exchanger 1c (CAX1c).